A 186-amino-acid polypeptide reads, in one-letter code: Alkyl hydroperoxide reductase AhpD (186 aa).

Residue C132 is the Proton donor of the active site. C132 and C135 are oxidised to a cystine. Residue C135 is the Cysteine sulfenic acid (-SOH) intermediate of the active site.

This sequence belongs to the AhpD family.

It catalyses the reaction N(6)-[(R)-dihydrolipoyl]-L-lysyl-[lipoyl-carrier protein] + a hydroperoxide = N(6)-[(R)-lipoyl]-L-lysyl-[lipoyl-carrier protein] + an alcohol + H2O. In terms of biological role, antioxidant protein with alkyl hydroperoxidase activity. Required for the reduction of the AhpC active site cysteine residues and for the regeneration of the AhpC enzyme activity. The polypeptide is Alkyl hydroperoxide reductase AhpD (Anaeromyxobacter dehalogenans (strain 2CP-1 / ATCC BAA-258)).